We begin with the raw amino-acid sequence, 254 residues long: MPLAKRIIPCLDIRDGRVVKNVQFHLNTWDAGDPVALAAEYDRQGADEIVFLDINASWEGRSATLDVLSRAAEQVFVPLTIGGGVSAVEHVKAYLRAGADKVSVNTAAVQRPDLIDEIADLFGSSTLVVAIDCKRRPEGGWEVYLHGGRTPTGIDAVAWAEEAARRGAGELLVTSMDADGTRQGYDIALHQALADAVGVPVIASGGAGSPEDILEVLTVGRADAALAASIFHSGRHTVGEVKAFLRERGVLVRS.

Catalysis depends on residues aspartate 12 and aspartate 132.

Belongs to the HisA/HisF family. In terms of assembly, heterodimer of HisH and HisF.

Its subcellular location is the cytoplasm. The catalysed reaction is 5-[(5-phospho-1-deoxy-D-ribulos-1-ylimino)methylamino]-1-(5-phospho-beta-D-ribosyl)imidazole-4-carboxamide + L-glutamine = D-erythro-1-(imidazol-4-yl)glycerol 3-phosphate + 5-amino-1-(5-phospho-beta-D-ribosyl)imidazole-4-carboxamide + L-glutamate + H(+). Its pathway is amino-acid biosynthesis; L-histidine biosynthesis; L-histidine from 5-phospho-alpha-D-ribose 1-diphosphate: step 5/9. Its function is as follows. IGPS catalyzes the conversion of PRFAR and glutamine to IGP, AICAR and glutamate. The HisF subunit catalyzes the cyclization activity that produces IGP and AICAR from PRFAR using the ammonia provided by the HisH subunit. This chain is Imidazole glycerol phosphate synthase subunit HisF, found in Symbiobacterium thermophilum (strain DSM 24528 / JCM 14929 / IAM 14863 / T).